Reading from the N-terminus, the 429-residue chain is Glutamate-1-semialdehyde 2,1-aminomutase (429 aa).

N6-(pyridoxal phosphate)lysine is present on K265.

The protein belongs to the class-III pyridoxal-phosphate-dependent aminotransferase family. HemL subfamily. As to quaternary structure, homodimer. Pyridoxal 5'-phosphate serves as cofactor.

It is found in the cytoplasm. It carries out the reaction (S)-4-amino-5-oxopentanoate = 5-aminolevulinate. It participates in porphyrin-containing compound metabolism; protoporphyrin-IX biosynthesis; 5-aminolevulinate from L-glutamyl-tRNA(Glu): step 2/2. The chain is Glutamate-1-semialdehyde 2,1-aminomutase from Ectopseudomonas mendocina (strain ymp) (Pseudomonas mendocina).